We begin with the raw amino-acid sequence, 438 residues long: V-type ATP synthase beta chain (438 aa).

The protein belongs to the ATPase alpha/beta chains family.

Produces ATP from ADP in the presence of a proton gradient across the membrane. The V-type beta chain is a regulatory subunit. The sequence is that of V-type ATP synthase beta chain (atpB) from Chlamydia trachomatis serovar D (strain ATCC VR-885 / DSM 19411 / UW-3/Cx).